The following is a 307-amino-acid chain: Aspartate carbamoyltransferase catalytic subunit (307 aa).

The carbamoyl phosphate site is built by R51 and T52. An L-aspartate-binding site is contributed by K80. Carbamoyl phosphate is bound by residues R101, H129, and Q132. L-aspartate-binding residues include R162 and R225. L264 and P265 together coordinate carbamoyl phosphate.

Belongs to the aspartate/ornithine carbamoyltransferase superfamily. ATCase family. In terms of assembly, heterododecamer (2C3:3R2) of six catalytic PyrB chains organized as two trimers (C3), and six regulatory PyrI chains organized as three dimers (R2).

It carries out the reaction carbamoyl phosphate + L-aspartate = N-carbamoyl-L-aspartate + phosphate + H(+). It participates in pyrimidine metabolism; UMP biosynthesis via de novo pathway; (S)-dihydroorotate from bicarbonate: step 2/3. Functionally, catalyzes the condensation of carbamoyl phosphate and aspartate to form carbamoyl aspartate and inorganic phosphate, the committed step in the de novo pyrimidine nucleotide biosynthesis pathway. This Lachnoclostridium phytofermentans (strain ATCC 700394 / DSM 18823 / ISDg) (Clostridium phytofermentans) protein is Aspartate carbamoyltransferase catalytic subunit.